A 162-amino-acid chain; its full sequence is Putative 4-hydroxy-4-methyl-2-oxoglutarate aldolase (162 aa).

Substrate contacts are provided by residues 75–78 (GDML) and Arg97. A divalent metal cation is bound at residue Asp98.

The protein belongs to the class II aldolase/RraA-like family. Homotrimer. A divalent metal cation is required as a cofactor.

The catalysed reaction is 4-hydroxy-4-methyl-2-oxoglutarate = 2 pyruvate. The enzyme catalyses oxaloacetate + H(+) = pyruvate + CO2. Functionally, catalyzes the aldol cleavage of 4-hydroxy-4-methyl-2-oxoglutarate (HMG) into 2 molecules of pyruvate. Also contains a secondary oxaloacetate (OAA) decarboxylase activity due to the common pyruvate enolate transition state formed following C-C bond cleavage in the retro-aldol and decarboxylation reactions. This is Putative 4-hydroxy-4-methyl-2-oxoglutarate aldolase from Ectopseudomonas mendocina (strain ymp) (Pseudomonas mendocina).